We begin with the raw amino-acid sequence, 240 residues long: Ubiquinone biosynthesis O-methyltransferase (240 aa).

S-adenosyl-L-methionine-binding residues include arginine 44, glycine 64, aspartate 85, and methionine 129.

Belongs to the methyltransferase superfamily. UbiG/COQ3 family.

The catalysed reaction is a 3-demethylubiquinol + S-adenosyl-L-methionine = a ubiquinol + S-adenosyl-L-homocysteine + H(+). It carries out the reaction a 3-(all-trans-polyprenyl)benzene-1,2-diol + S-adenosyl-L-methionine = a 2-methoxy-6-(all-trans-polyprenyl)phenol + S-adenosyl-L-homocysteine + H(+). The protein operates within cofactor biosynthesis; ubiquinone biosynthesis. O-methyltransferase that catalyzes the 2 O-methylation steps in the ubiquinone biosynthetic pathway. This is Ubiquinone biosynthesis O-methyltransferase from Shigella flexneri serotype 5b (strain 8401).